The primary structure comprises 97 residues: Large ribosomal subunit protein uL23 (97 aa).

It belongs to the universal ribosomal protein uL23 family. Part of the 50S ribosomal subunit. Contacts protein L29, and trigger factor when it is bound to the ribosome.

Its function is as follows. One of the early assembly proteins it binds 23S rRNA. One of the proteins that surrounds the polypeptide exit tunnel on the outside of the ribosome. Forms the main docking site for trigger factor binding to the ribosome. The protein is Large ribosomal subunit protein uL23 of Rhizobium rhizogenes (strain K84 / ATCC BAA-868) (Agrobacterium radiobacter).